The primary structure comprises 273 residues: MIDLIVSQGRVADRAAWMIEGAARTARALEERYGLKGHYVGEPAPHADDDWSVALPQARETLVAVREAATESIKGDNLTVLVNNTCSVSLATLPVVAREHPDAVVLYIDGHGDFNTPETTDTGYLGGMVLSGACGLWDSGHGAGLRPEQAVLVGSRDIDEGERELIRKAGVRVIPPGEATAQAVLDAVKDAPVWIHIDWDVLEPGSIPADYTVPDGMLPAQIRAVFEAIPAERLIGVELAELNAPADSERAEQAVAVILDMVAPAFDAAAARP.

Residues Asp-109, His-111, Asp-113, Asp-198, and Asp-200 each coordinate Mn(2+).

The protein belongs to the arginase family. Mn(2+) is required as a cofactor.

The enzyme catalyses N(omega)-hydroxy-L-arginine + H2O = hydroxyurea + L-ornithine. In terms of biological role, involved in the biosynthesis of the antibiotic D-cycloserine (DCS), a cyclic structural analog of D-alanine, used as an antitubercular agent. Catalyzes the hydrolysis of N(omega)-hydroxy-L-arginine (NHA) to yield hydroxyurea (HU) and L-ornithine. The chain is N(omega)-hydroxy-L-arginine amidinohydrolase from Streptomyces lavendulae.